We begin with the raw amino-acid sequence, 205 residues long: Holliday junction branch migration complex subunit RuvA (205 aa).

The domain I stretch occupies residues 1–64 (MIGKLKGVVD…EDMIRLYGFR (64 aa)). Residues 65-143 (SDAEREWFRL…AFAPVDPALV (79 aa)) are domain II. Residues 144 to 152 (ALAGAVEEG) are flexible linker. The domain III stretch occupies residues 153–205 (AAPQPVADAVSALVNLGYPQVQAAAAIAAALKGAGEGAEAKVLIRLGLRELAR).

The protein belongs to the RuvA family. Homotetramer. Forms an RuvA(8)-RuvB(12)-Holliday junction (HJ) complex. HJ DNA is sandwiched between 2 RuvA tetramers; dsDNA enters through RuvA and exits via RuvB. An RuvB hexamer assembles on each DNA strand where it exits the tetramer. Each RuvB hexamer is contacted by two RuvA subunits (via domain III) on 2 adjacent RuvB subunits; this complex drives branch migration. In the full resolvosome a probable DNA-RuvA(4)-RuvB(12)-RuvC(2) complex forms which resolves the HJ.

It is found in the cytoplasm. In terms of biological role, the RuvA-RuvB-RuvC complex processes Holliday junction (HJ) DNA during genetic recombination and DNA repair, while the RuvA-RuvB complex plays an important role in the rescue of blocked DNA replication forks via replication fork reversal (RFR). RuvA specifically binds to HJ cruciform DNA, conferring on it an open structure. The RuvB hexamer acts as an ATP-dependent pump, pulling dsDNA into and through the RuvAB complex. HJ branch migration allows RuvC to scan DNA until it finds its consensus sequence, where it cleaves and resolves the cruciform DNA. The sequence is that of Holliday junction branch migration complex subunit RuvA from Methylobacterium radiotolerans (strain ATCC 27329 / DSM 1819 / JCM 2831 / NBRC 15690 / NCIMB 10815 / 0-1).